The primary structure comprises 228 residues: Protein TIFY 10a (228 aa).

Residues 75–110 enclose the Tify domain; it reads REQEKRQLTIFYGGKVLVFDDFPAEKAKDLMQMASK. The Jas motif lies at 164–189; it reads PQARKASLHRFLEKRKDRLQAKAPYQ. Residues 166–173 carry the Nuclear localization signal motif; the sequence is ARKASLHR. The segment at 175–228 is disordered; it reads LEKRKDRLQAKAPYQGSPSDASPVKKELQESQPWLGLGPQVAAPDLSLRQESSQ.

This sequence belongs to the TIFY/JAZ family. As to quaternary structure, interacts with COI1A and COI1B in a coronatine-dependent manner. Coronatine is an analog of jasmonoyl isoleucine (JA-Ile). Ubiquitinated. Targeted for degradation by the SCF(COI1) E3 ubiquitin ligase-proteasome pathway during jasmonate signaling.

It is found in the nucleus. Repressor of jasmonate responses. This chain is Protein TIFY 10a, found in Oryza sativa subsp. japonica (Rice).